We begin with the raw amino-acid sequence, 303 residues long: Sterol-4-alpha-carboxylate 3-dehydrogenase ERG26, decarboxylating (303 aa).

NADP(+) is bound by residues 8–9 and 30–32; these read SL and TAS. Ser71 is a binding site for substrate. Positions 77–96 are disordered; the sequence is PTQEPTSEENAHRYDENNAP. NADP(+) contacts are provided by residues Tyr102, Lys106, and 128–131; that span reads IPGI. Tyr102 is a binding site for substrate. Residue Lys106 is the Proton donor of the active site.

It belongs to the 3-beta-HSD family. As to quaternary structure, heterotetramer of ERG25, ERG26, ERG27 and ERG28. ERG28 acts as a scaffold to tether ERG27 and other 4,4-demethylation-related enzymes, forming a demethylation enzyme complex, in the endoplasmic reticulum.

The protein localises to the endoplasmic reticulum membrane. It functions in the pathway steroid metabolism; ergosterol biosynthesis. Functionally, sterol-4-alpha-carboxylate 3-dehydrogenase; part of the third module of ergosterol biosynthesis pathway that includes the late steps of the pathway. ERG26 is a catalytic component of the C-4 demethylation complex that catalyzes the conversion of 4,4-dimethylfecosterol into fecosterol via 4-methylfecosterol. The third module or late pathway involves the ergosterol synthesis itself through consecutive reactions that mainly occur in the endoplasmic reticulum (ER) membrane. Firstly, the squalene synthase ERG9 catalyzes the condensation of 2 farnesyl pyrophosphate moieties to form squalene, which is the precursor of all steroids. Squalene synthase is crucial for balancing the incorporation of farnesyl diphosphate (FPP) into sterol and nonsterol isoprene synthesis. Secondly, squalene is converted into lanosterol by the consecutive action of the squalene epoxidase ERG1 and the lanosterol synthase ERG7. Then, the delta(24)-sterol C-methyltransferase ERG6 methylates lanosterol at C-24 to produce eburicol. Eburicol is the substrate of the sterol 14-alpha demethylase encoded by CYP51A, CYP51B and CYP51C, to yield 4,4,24-trimethyl ergosta-8,14,24(28)-trienol. CYP51B encodes the enzyme primarily responsible for sterol 14-alpha-demethylation, and plays an essential role in ascospore formation. CYP51A encodes an additional sterol 14-alpha-demethylase, induced on ergosterol depletion and responsible for the intrinsic variation in azole sensitivity. The third CYP51 isoform, CYP51C, does not encode a sterol 14-alpha-demethylase, but is required for full virulence on host wheat ears. The C-14 reductase ERG24 then reduces the C14=C15 double bond which leads to 4,4-dimethylfecosterol. A sequence of further demethylations at C-4, involving the C-4 demethylation complex containing the C-4 methylsterol oxidases ERG25, the sterol-4-alpha-carboxylate 3-dehydrogenase ERG26 and the 3-keto-steroid reductase ERG27, leads to the production of fecosterol via 4-methylfecosterol. ERG28 has a role as a scaffold to help anchor ERG25, ERG26 and ERG27 to the endoplasmic reticulum. The C-8 sterol isomerase ERG2 then catalyzes the reaction which results in unsaturation at C-7 in the B ring of sterols and thus converts fecosterol to episterol. The sterol-C5-desaturases ERG3A and ERG3BB then catalyze the introduction of a C-5 double bond in the B ring to produce 5-dehydroepisterol. The C-22 sterol desaturases ERG5A and ERG5B further convert 5-dehydroepisterol into ergosta-5,7,22,24(28)-tetraen-3beta-ol by forming the C-22(23) double bond in the sterol side chain. Finally, ergosta-5,7,22,24(28)-tetraen-3beta-ol is substrate of the C-24(28) sterol reductase ERG4 to produce ergosterol. This chain is Sterol-4-alpha-carboxylate 3-dehydrogenase ERG26, decarboxylating, found in Gibberella zeae (strain ATCC MYA-4620 / CBS 123657 / FGSC 9075 / NRRL 31084 / PH-1) (Wheat head blight fungus).